We begin with the raw amino-acid sequence, 418 residues long: Glutamyl-tRNA reductase (418 aa).

Residues T49–R52, S109, E114–Q116, and Q120 each bind substrate. Residue C50 is the Nucleophile of the active site. G189–I194 is a binding site for NADP(+).

It belongs to the glutamyl-tRNA reductase family. Homodimer.

The catalysed reaction is (S)-4-amino-5-oxopentanoate + tRNA(Glu) + NADP(+) = L-glutamyl-tRNA(Glu) + NADPH + H(+). Its pathway is porphyrin-containing compound metabolism; protoporphyrin-IX biosynthesis; 5-aminolevulinate from L-glutamyl-tRNA(Glu): step 1/2. In terms of biological role, catalyzes the NADPH-dependent reduction of glutamyl-tRNA(Glu) to glutamate 1-semialdehyde (GSA). This Escherichia coli O139:H28 (strain E24377A / ETEC) protein is Glutamyl-tRNA reductase.